Reading from the N-terminus, the 310-residue chain is Ribose-phosphate pyrophosphokinase (310 aa).

ATP-binding positions include 33 to 35 (DGE) and 92 to 93 (RQ). Positions 127 and 166 each coordinate Mg(2+). Lys-189 is a catalytic residue. D-ribose 5-phosphate is bound by residues Arg-191, Asp-215, and 219–223 (DTAGT).

This sequence belongs to the ribose-phosphate pyrophosphokinase family. Class I subfamily. In terms of assembly, homohexamer. Mg(2+) serves as cofactor.

It is found in the cytoplasm. The enzyme catalyses D-ribose 5-phosphate + ATP = 5-phospho-alpha-D-ribose 1-diphosphate + AMP + H(+). It participates in metabolic intermediate biosynthesis; 5-phospho-alpha-D-ribose 1-diphosphate biosynthesis; 5-phospho-alpha-D-ribose 1-diphosphate from D-ribose 5-phosphate (route I): step 1/1. Its function is as follows. Involved in the biosynthesis of the central metabolite phospho-alpha-D-ribosyl-1-pyrophosphate (PRPP) via the transfer of pyrophosphoryl group from ATP to 1-hydroxyl of ribose-5-phosphate (Rib-5-P). The protein is Ribose-phosphate pyrophosphokinase of Bordetella parapertussis (strain 12822 / ATCC BAA-587 / NCTC 13253).